A 572-amino-acid polypeptide reads, in one-letter code: Proline--tRNA ligase (572 aa).

Belongs to the class-II aminoacyl-tRNA synthetase family. ProS type 1 subfamily. In terms of assembly, homodimer.

It is found in the cytoplasm. The catalysed reaction is tRNA(Pro) + L-proline + ATP = L-prolyl-tRNA(Pro) + AMP + diphosphate. Its function is as follows. Catalyzes the attachment of proline to tRNA(Pro) in a two-step reaction: proline is first activated by ATP to form Pro-AMP and then transferred to the acceptor end of tRNA(Pro). As ProRS can inadvertently accommodate and process non-cognate amino acids such as alanine and cysteine, to avoid such errors it has two additional distinct editing activities against alanine. One activity is designated as 'pretransfer' editing and involves the tRNA(Pro)-independent hydrolysis of activated Ala-AMP. The other activity is designated 'posttransfer' editing and involves deacylation of mischarged Ala-tRNA(Pro). The misacylated Cys-tRNA(Pro) is not edited by ProRS. This is Proline--tRNA ligase from Klebsiella pneumoniae (strain 342).